The following is a 107-amino-acid chain: Antimicrobial peptide microplusin (107 aa).

Positions 1 to 19 are cleaved as a signal peptide; the sequence is MKSLLVCLVLAVVVLVASG. 3 disulfide bridges follow: Cys25–Cys60, Cys38–Cys88, and Cys49–Cys54. Residues 86–107 form a disordered region; the sequence is TDCDHSHGHEHSHGHEHGHGHH. Residues 87-107 are compositionally biased toward basic and acidic residues; that stretch reads DCDHSHGHEHSHGHEHGHGHH.

It is found in the secreted. Its function is as follows. Has bacteriostatic activity against Gram-positive bacteria, but not against Gram-negative bacteria. Has fungistatic activity against some but not all fungi. Binds and sequesters copper and iron ions. Copper-chelating is crucial for antimicrobial activity against M.luteus. This is Antimicrobial peptide microplusin from Ixodes scapularis (Black-legged tick).